The sequence spans 388 residues: Methylthioribose-1-phosphate isomerase (388 aa).

Residue D252 is the Proton donor of the active site.

Belongs to the eIF-2B alpha/beta/delta subunits family. MtnA subfamily.

Its subcellular location is the cytoplasm. The protein resides in the nucleus. It catalyses the reaction 5-(methylsulfanyl)-alpha-D-ribose 1-phosphate = 5-(methylsulfanyl)-D-ribulose 1-phosphate. It participates in amino-acid biosynthesis; L-methionine biosynthesis via salvage pathway; L-methionine from S-methyl-5-thio-alpha-D-ribose 1-phosphate: step 1/6. In terms of biological role, catalyzes the interconversion of methylthioribose-1-phosphate (MTR-1-P) into methylthioribulose-1-phosphate (MTRu-1-P). This Verticillium alfalfae (strain VaMs.102 / ATCC MYA-4576 / FGSC 10136) (Verticillium wilt of alfalfa) protein is Methylthioribose-1-phosphate isomerase.